The primary structure comprises 683 residues: FAD-binding monooxygenase ausC (683 aa).

Residue Asn5 is glycosylated (N-linked (GlcNAc...) asparagine). The helical transmembrane segment at 111-131 (ILIIGAGFGGLLFAVRLIQTG) threads the bilayer. Residues 150–153 (TWYW), 162–163 (DT), and Tyr168 each bind FAD. 160 to 162 (MCD) provides a ligand contact to NADP(+). An N-linked (GlcNAc...) asparagine glycan is attached at Asn286. NADP(+) is bound by residues 310–316 (TGASAVQ) and 333–334 (RT). N-linked (GlcNAc...) asparagine glycans are attached at residues Asn525 and Asn572.

It belongs to the FAD-binding monooxygenase family. The cofactor is FAD.

The protein localises to the membrane. The catalysed reaction is preaustinoid A + AH2 + O2 = preaustinoid A1 + A + H2O. It functions in the pathway secondary metabolite biosynthesis; terpenoid biosynthesis. FAD-binding monooxygenase; part of the gene cluster A that mediates the biosynthesis of austinol and dehydroaustinol, two fungal meroterpenoids. The first step of the pathway is the synthesis of 3,5-dimethylorsellinic acid by the polyketide synthase ausA. 3,5-dimethylorsellinic acid is then prenylated by the polyprenyl transferase ausN. Further epoxidation by the FAD-dependent monooxygenase ausM and cyclization by the probable terpene cyclase ausL lead to the formation of protoaustinoid A. Protoaustinoid A is then oxidized to spiro-lactone preaustinoid A3 by the combined action of the FAD-binding monooxygenases ausB and ausC, and the dioxygenase ausE. Acid-catalyzed keto-rearrangement and ring contraction of the tetraketide portion of preaustinoid A3 by ausJ lead to the formation of preaustinoid A4. The aldo-keto reductase ausK, with the help of ausH, is involved in the next step by transforming preaustinoid A4 into isoaustinone which is in turn hydroxylated by the P450 monooxygenase ausI to form austinolide. Finally, the cytochrome P450 monooxygenase ausG modifies austinolide to austinol. Austinol can be further modified to dehydroaustinol which forms a diffusible complex with diorcinol that initiates conidiation. Due to genetic rearrangements of the clusters and the subsequent loss of some enzymes, the end products of the Emericella nidulans austinoid biosynthesis clusters are austinol and dehydroaustinol, even if additional enzymes, such as the O-acetyltransferase ausQ and the cytochrome P450 monooxygenase ausR are still functional. The chain is FAD-binding monooxygenase ausC from Emericella nidulans (strain FGSC A4 / ATCC 38163 / CBS 112.46 / NRRL 194 / M139) (Aspergillus nidulans).